The following is a 405-amino-acid chain: Multidrug resistance protein MdtH (405 aa).

12 consecutive transmembrane segments (helical) span residues 13-33 (YFLL…FPLI), 34-54 (SIRF…ALGL), 78-95 (MIIA…LMGI), 99-116 (PWLL…GTLF), 139-159 (LLMM…SWLL), 165-185 (LVCL…AWLL), 213-233 (YVLT…MLPI), 243-263 (AAVK…LYPI), 277-297 (LMAG…IEDL), 299-319 (ALFM…PARE), 340-360 (LGLA…YDVG), and 365-385 (IPQL…LGLY).

The protein belongs to the major facilitator superfamily. DHA1 family. MdtH (TC 2.A.1.2.21) subfamily.

The protein localises to the cell inner membrane. This chain is Multidrug resistance protein MdtH, found in Sodalis glossinidius (strain morsitans).